Reading from the N-terminus, the 583-residue chain is Sensor protein SrrB (583 aa).

At 1–11 (MMSRLNSVVIK) the chain is on the cytoplasmic side. Residues 12-32 (LWLTIILIVTTVLILLSIALI) traverse the membrane as a helical segment. Topologically, residues 33 to 174 (TFMQYYFTQE…SIEDTNNAIT (142 aa)) are extracellular. Residues 175–195 (IITIITAVIFLTITTVFAFFL) form a helical membrane-spanning segment. At 196–583 (SSRITKPLRR…TFIIKLPKPE (388 aa)) the chain is on the cytoplasmic side. The HAMP domain occupies 197–249 (SRITKPLRRLRDQATRVSEGDYSYKPSVTTKDEIGQLSQAFNQMSTEIEEHVD). The Histidine kinase domain maps to 366–583 (NVSHELRTPI…TFIIKLPKPE (218 aa)). Phosphohistidine; by autocatalysis is present on histidine 369.

The protein resides in the cell membrane. The catalysed reaction is ATP + protein L-histidine = ADP + protein N-phospho-L-histidine.. Functionally, member of the two-component regulatory system SrrA/SrrB, which is involved in the global regulation of staphylococcal virulence factors in response to environmental oxygen levels as well as biofilm formation. Also plays an essential role in host-derived nitric oxide resistance by regulating hmp/flavohemoglobin, an enzyme that detoxifies nitric oxide by converting it to nitrate. Functions as a sensor protein kinase which is autophosphorylated at a histidine residue and transfers its phosphate group to SrrA. In turn, SrrA binds to the upstream promoter regions of the target genes to positively and negatively regulate their expression. The polypeptide is Sensor protein SrrB (srrB) (Staphylococcus aureus).